The chain runs to 175 residues: ATP synthase subunit b (175 aa).

A helical transmembrane segment spans residues 14–34 (LSPNPGLIFWTTVSFVIVLLI).

Belongs to the ATPase B chain family. As to quaternary structure, F-type ATPases have 2 components, F(1) - the catalytic core - and F(0) - the membrane proton channel. F(1) has five subunits: alpha(3), beta(3), gamma(1), delta(1), epsilon(1). F(0) has four main subunits: a(1), b(2) and c(10-14). The alpha and beta chains form an alternating ring which encloses part of the gamma chain. F(1) is attached to F(0) by a central stalk formed by the gamma and epsilon chains, while a peripheral stalk is formed by the delta and b chains.

The protein resides in the cell inner membrane. Functionally, f(1)F(0) ATP synthase produces ATP from ADP in the presence of a proton or sodium gradient. F-type ATPases consist of two structural domains, F(1) containing the extramembraneous catalytic core and F(0) containing the membrane proton channel, linked together by a central stalk and a peripheral stalk. During catalysis, ATP synthesis in the catalytic domain of F(1) is coupled via a rotary mechanism of the central stalk subunits to proton translocation. Component of the F(0) channel, it forms part of the peripheral stalk, linking F(1) to F(0). This chain is ATP synthase subunit b, found in Chlorobium phaeobacteroides (strain DSM 266 / SMG 266 / 2430).